Consider the following 241-residue polypeptide: Uridylate kinase (241 aa).

Lysine 12–glycine 15 is an ATP binding site. Glycine 54 is a binding site for UMP. Positions 55 and 59 each coordinate ATP. UMP is bound by residues aspartate 74 and valine 135–threonine 142. Threonine 162, tyrosine 168, and aspartate 171 together coordinate ATP.

The protein belongs to the UMP kinase family. Homohexamer.

The protein localises to the cytoplasm. It catalyses the reaction UMP + ATP = UDP + ADP. It participates in pyrimidine metabolism; CTP biosynthesis via de novo pathway; UDP from UMP (UMPK route): step 1/1. Inhibited by UTP. In terms of biological role, catalyzes the reversible phosphorylation of UMP to UDP. This Sphingopyxis alaskensis (strain DSM 13593 / LMG 18877 / RB2256) (Sphingomonas alaskensis) protein is Uridylate kinase.